Here is a 541-residue protein sequence, read N- to C-terminus: MKSYTPYFMLLWSAVGIARAAKIIIVPPIMFESHLYIFKTLASALHERGHHTVLLLSEGRDIAPSNHYSLQRYPGIFNSTTSDAFLQSKMRNIFSGRLTAVELVDILDHYTKNCDMMVGNQALIQGLKKEKFDLLLVDPNDMCGFVIAHLLGVKYAVFSTGLWYPAEVGAPAPLAYVPEFNSLLTDRMNFLERMKNTGVYLISRIGVSFLVLPKYERIMQKYNLLPAKSMYDLVHGSSLWMLCTDVALEFPRPTLPNVVYVGGILTKPASPLPEDLQRWVSGAQEHGFVLVSFGAGVKYLSEDIANKLAGALGRLPQKVIWRFSGTKPKNLGNNTKLIEWLPQNDLLGHSNIRAFLSHGGLNSIFETMYHGVPVVGIPLFGDHYDTMTRVQAKGMGILLEWNTVTEGELYDALVKVINNPSYRQRAQKLSEIHKDQPGHPVNRTTYWIDYILRHDGARHLRSAVHQISFCQYFLLDIAFVLLLGAVLLYFILSYVTKFIYRKIKSLWSKNEHSTVNGHYQNGIRNGKYKGNGRVKHEKKVR.

The first 20 residues, 1 to 20 (MKSYTPYFMLLWSAVGIARA), serve as a signal peptide directing secretion. N-linked (GlcNAc...) asparagine glycosylation is found at asparagine 78, asparagine 333, and asparagine 442. The helical transmembrane segment at 472 to 492 (YFLLDIAFVLLLGAVLLYFIL) threads the bilayer. The interval 518-541 (HYQNGIRNGKYKGNGRVKHEKKVR) is disordered. The segment covering 526–541 (GKYKGNGRVKHEKKVR) has biased composition (basic residues).

This sequence belongs to the UDP-glycosyltransferase family.

Its subcellular location is the membrane. The protein resides in the endoplasmic reticulum. The catalysed reaction is an N-acylsphing-4-enine + UDP-alpha-D-galactose = a beta-D-galactosyl-(1&lt;-&gt;1')-N-acylsphing-4-enine + UDP + H(+). It catalyses the reaction N-(2-hydroxy-hexanoyl)-sphing-4-enine + UDP-alpha-D-galactose = N-(2-hydroxy-hexanoyl)-beta-D-galactosyl-sphing-4-enine + UDP + H(+). It carries out the reaction N-(2-hydroxy-hexanoyl)-sphinganine + UDP-alpha-D-galactose = N-(2-hydroxyhexanoyl)-beta-D-galactosylsphinganine + UDP + H(+). The enzyme catalyses an N-acyl-sphingoid base + UDP-alpha-D-galactose = a D-galactosylceramide + UDP + H(+). It participates in sphingolipid metabolism; galactosylceramide biosynthesis. Its function is as follows. Catalyzes the transfer of galactose to ceramide, a key enzymatic step in the biosynthesis of galactocerebrosides, which are abundant sphingolipids of the myelin membrane of the central nervous system and peripheral nervous system. Galactosylates both hydroxy- and non-hydroxy fatty acid-containing ceramides and diglycerides. This Mus musculus (Mouse) protein is 2-hydroxyacylsphingosine 1-beta-galactosyltransferase.